A 573-amino-acid polypeptide reads, in one-letter code: 2-isopropylmalate synthase (573 aa).

The 278-residue stretch at P37 to D314 folds into the Pyruvate carboxyltransferase domain. 4 residues coordinate Mg(2+): D46, H253, H255, and N289. Positions N456 to R573 are regulatory domain.

The protein belongs to the alpha-IPM synthase/homocitrate synthase family. LeuA type 2 subfamily. In terms of assembly, homodimer. Mg(2+) serves as cofactor.

The protein resides in the cytoplasm. It catalyses the reaction 3-methyl-2-oxobutanoate + acetyl-CoA + H2O = (2S)-2-isopropylmalate + CoA + H(+). It participates in amino-acid biosynthesis; L-leucine biosynthesis; L-leucine from 3-methyl-2-oxobutanoate: step 1/4. Catalyzes the condensation of the acetyl group of acetyl-CoA with 3-methyl-2-oxobutanoate (2-ketoisovalerate) to form 3-carboxy-3-hydroxy-4-methylpentanoate (2-isopropylmalate). The protein is 2-isopropylmalate synthase of Streptomyces avermitilis (strain ATCC 31267 / DSM 46492 / JCM 5070 / NBRC 14893 / NCIMB 12804 / NRRL 8165 / MA-4680).